The sequence spans 469 residues: 3-isopropylmalate dehydratase large subunit (469 aa).

Cysteine 350, cysteine 410, and cysteine 413 together coordinate [4Fe-4S] cluster.

The protein belongs to the aconitase/IPM isomerase family. LeuC type 1 subfamily. Heterodimer of LeuC and LeuD. Requires [4Fe-4S] cluster as cofactor.

It carries out the reaction (2R,3S)-3-isopropylmalate = (2S)-2-isopropylmalate. Its pathway is amino-acid biosynthesis; L-leucine biosynthesis; L-leucine from 3-methyl-2-oxobutanoate: step 2/4. Catalyzes the isomerization between 2-isopropylmalate and 3-isopropylmalate, via the formation of 2-isopropylmaleate. This Rhizobium leguminosarum bv. trifolii (strain WSM2304) protein is 3-isopropylmalate dehydratase large subunit.